We begin with the raw amino-acid sequence, 86 residues long: Short neurotoxin homolog NTL1 (86 aa).

A signal peptide spans 1–21; it reads MKTLLLSLVVLTIACLDLGYT. 4 disulfide bridges follow: cysteine 24–cysteine 45, cysteine 38–cysteine 62, cysteine 66–cysteine 78, and cysteine 79–cysteine 84.

As to expression, expressed by the venom gland.

Its subcellular location is the secreted. The chain is Short neurotoxin homolog NTL1 from Bungarus multicinctus (Many-banded krait).